The sequence spans 393 residues: NAD(P)H-quinone oxidoreductase subunit H, chloroplastic (393 aa).

It belongs to the complex I 49 kDa subunit family. As to quaternary structure, NDH is composed of at least 16 different subunits, 5 of which are encoded in the nucleus.

The protein localises to the plastid. It is found in the chloroplast thylakoid membrane. It catalyses the reaction a plastoquinone + NADH + (n+1) H(+)(in) = a plastoquinol + NAD(+) + n H(+)(out). The catalysed reaction is a plastoquinone + NADPH + (n+1) H(+)(in) = a plastoquinol + NADP(+) + n H(+)(out). Its function is as follows. NDH shuttles electrons from NAD(P)H:plastoquinone, via FMN and iron-sulfur (Fe-S) centers, to quinones in the photosynthetic chain and possibly in a chloroplast respiratory chain. The immediate electron acceptor for the enzyme in this species is believed to be plastoquinone. Couples the redox reaction to proton translocation, and thus conserves the redox energy in a proton gradient. The sequence is that of NAD(P)H-quinone oxidoreductase subunit H, chloroplastic from Carica papaya (Papaya).